The sequence spans 325 residues: Tetraacyldisaccharide 4'-kinase (325 aa).

55 to 62 is a binding site for ATP; the sequence is TAGGNGKT.

The protein belongs to the LpxK family.

It carries out the reaction a lipid A disaccharide + ATP = a lipid IVA + ADP + H(+). It functions in the pathway glycolipid biosynthesis; lipid IV(A) biosynthesis; lipid IV(A) from (3R)-3-hydroxytetradecanoyl-[acyl-carrier-protein] and UDP-N-acetyl-alpha-D-glucosamine: step 6/6. In terms of biological role, transfers the gamma-phosphate of ATP to the 4'-position of a tetraacyldisaccharide 1-phosphate intermediate (termed DS-1-P) to form tetraacyldisaccharide 1,4'-bis-phosphate (lipid IVA). This chain is Tetraacyldisaccharide 4'-kinase, found in Cronobacter sakazakii (strain ATCC BAA-894) (Enterobacter sakazakii).